Consider the following 284-residue polypeptide: 2-dehydro-3-deoxyphosphooctonate aldolase (284 aa).

The protein belongs to the KdsA family.

Its subcellular location is the cytoplasm. The enzyme catalyses D-arabinose 5-phosphate + phosphoenolpyruvate + H2O = 3-deoxy-alpha-D-manno-2-octulosonate-8-phosphate + phosphate. The protein operates within carbohydrate biosynthesis; 3-deoxy-D-manno-octulosonate biosynthesis; 3-deoxy-D-manno-octulosonate from D-ribulose 5-phosphate: step 2/3. It functions in the pathway bacterial outer membrane biogenesis; lipopolysaccharide biosynthesis. The sequence is that of 2-dehydro-3-deoxyphosphooctonate aldolase from Enterobacter sp. (strain 638).